A 433-amino-acid polypeptide reads, in one-letter code: UDP-N-acetylglucosamine 1-carboxyvinyltransferase 2 (433 aa).

Residue 23–24 (KN) participates in phosphoenolpyruvate binding. Residue arginine 96 participates in UDP-N-acetyl-alpha-D-glucosamine binding. Residue cysteine 120 is the Proton donor of the active site. Cysteine 120 carries the 2-(S-cysteinyl)pyruvic acid O-phosphothioketal modification. Residues 125-129 (RPIDL), aspartate 308, and valine 330 contribute to the UDP-N-acetyl-alpha-D-glucosamine site.

It belongs to the EPSP synthase family. MurA subfamily.

Its subcellular location is the cytoplasm. It catalyses the reaction phosphoenolpyruvate + UDP-N-acetyl-alpha-D-glucosamine = UDP-N-acetyl-3-O-(1-carboxyvinyl)-alpha-D-glucosamine + phosphate. It functions in the pathway cell wall biogenesis; peptidoglycan biosynthesis. Cell wall formation. Adds enolpyruvyl to UDP-N-acetylglucosamine. In Enterococcus faecalis (strain ATCC 700802 / V583), this protein is UDP-N-acetylglucosamine 1-carboxyvinyltransferase 2.